The primary structure comprises 427 residues: Glutamate-1-semialdehyde 2,1-aminomutase (427 aa).

An N6-(pyridoxal phosphate)lysine modification is found at Lys265.

Belongs to the class-III pyridoxal-phosphate-dependent aminotransferase family. HemL subfamily. Homodimer. Pyridoxal 5'-phosphate is required as a cofactor.

It localises to the cytoplasm. The catalysed reaction is (S)-4-amino-5-oxopentanoate = 5-aminolevulinate. The protein operates within porphyrin-containing compound metabolism; protoporphyrin-IX biosynthesis; 5-aminolevulinate from L-glutamyl-tRNA(Glu): step 2/2. This Photorhabdus laumondii subsp. laumondii (strain DSM 15139 / CIP 105565 / TT01) (Photorhabdus luminescens subsp. laumondii) protein is Glutamate-1-semialdehyde 2,1-aminomutase.